We begin with the raw amino-acid sequence, 157 residues long: UPF0225 protein PMI1492 (157 aa).

Belongs to the UPF0225 family.

The polypeptide is UPF0225 protein PMI1492 (Proteus mirabilis (strain HI4320)).